We begin with the raw amino-acid sequence, 298 residues long: MSDQALSFLKDFLAGGVAAAVSKTAVAPIERVKLLLQVQHASKQISAEKQYKGIIDCVVRIPKEQGFLSFWRGNLANVIRYFPTQALNFAFKDKYKQIFLGGVDRHKQFWRYFAGNLASGGAAGATSLCFVYPLDFARTRLAADVGKGAAQREFSGLGNCLTKIFKSDGLRGLYQGFNVSVQGIIIYRAAYFGVYDTAKGMLPDPKNVHIIVSWMIAQTVTAVAGLVSYPFDTVRRRMMMQSGRKGADIMYTGTVDCWKKIAKDEGAKAFFKGAWSNVLRGMGGAFVLVLYDEIKKYV.

Over 1 to 7 (MSDQALS) the chain is Mitochondrial intermembrane. At Ser2 the chain carries N-acetylserine. A Solcar 1 repeat occupies 6–98 (LSFLKDFLAG…FAFKDKYKQI (93 aa)). At Ser7 the chain carries Phosphoserine. Residues 8-37 (FLKDFLAGGVAAAVSKTAVAPIERVKLLLQ) form a helical membrane-spanning segment. Residues 38–74 (VQHASKQISAEKQYKGIIDCVVRIPKEQGFLSFWRGN) lie on the Mitochondrial matrix side of the membrane. Lys52 carries the post-translational modification N6,N6,N6-trimethyllysine. The chain crosses the membrane as a helical span at residues 75-99 (LANVIRYFPTQALNFAFKDKYKQIF). Arg80 and Lys92 together coordinate ADP. Residues 100-109 (LGGVDRHKQF) are Mitochondrial intermembrane-facing. Residues 110–130 (WRYFAGNLASGGAAGATSLCF) traverse the membrane as a helical segment. 2 Solcar repeats span residues 111-201 (RYFA…AKGM) and 212-297 (VSWM…IKKY). The Mitochondrial matrix portion of the chain corresponds to 131–178 (VYPLDFARTRLAADVGKGAAQREFSGLGNCLTKIFKSDGLRGLYQGFN). At Lys147 the chain carries N6-succinyllysine. The residue at position 160 (Cys160) is an S-nitrosocysteine. Residues 179-199 (VSVQGIIIYRAAYFGVYDTAK) traverse the membrane as a helical segment. Residues 200 to 210 (GMLPDPKNVHI) are Mitochondrial intermembrane-facing. The helical transmembrane segment at 211–231 (IVSWMIAQTVTAVAGLVSYPF) threads the bilayer. The Mitochondrial matrix portion of the chain corresponds to 232–273 (DTVRRRMMMQSGRKGADIMYTGTVDCWKKIAKDEGAKAFFKG). An ADP-binding site is contributed by Arg235. The segment at 235–240 (RRRMMM) is important for transport activity. A Nucleotide carrier signature motif motif is present at residues 235–240 (RRRMMM). N6-succinyllysine is present on residues Lys245 and Lys272. The chain crosses the membrane as a helical span at residues 274-291 (AWSNVLRGMGGAFVLVLY). At 292–298 (DEIKKYV) the chain is on the mitochondrial intermembrane side.

It belongs to the mitochondrial carrier (TC 2.A.29) family. As to quaternary structure, monomer. Found in a complex with ARL2, ARL2BP and SLC25A4/ANT1. Interacts with ARL2BP. Interacts with TIMM44; leading to inhibit the presequence translocase TIMM23, thereby promoting stabilization of PINK1. Under cell death induction, transglutaminated by TGM2. Transglutamination leads to formation of covalent cross-links between a glutamine and the epsilon-amino group of a lysine residue, forming polymers.

The protein localises to the mitochondrion inner membrane. It is found in the membrane. It carries out the reaction ADP(in) + ATP(out) = ADP(out) + ATP(in). The catalysed reaction is H(+)(in) = H(+)(out). Its activity is regulated as follows. The matrix-open state (m-state) is inhibited by the membrane-permeable bongkrekic acid (BKA). The cytoplasmic-open state (c-state) is inhibited by the membrane-impermeable toxic inhibitor carboxyatractyloside (CATR). Proton transporter activity is inhibited by ADP:ATP antiporter activity. Functionally, ADP:ATP antiporter that mediates import of ADP into the mitochondrial matrix for ATP synthesis, and export of ATP out to fuel the cell. Cycles between the cytoplasmic-open state (c-state) and the matrix-open state (m-state): operates by the alternating access mechanism with a single substrate-binding site intermittently exposed to either the cytosolic (c-state) or matrix (m-state) side of the inner mitochondrial membrane. In addition to its ADP:ATP antiporter activity, also involved in mitochondrial uncoupling and mitochondrial permeability transition pore (mPTP) activity. Plays a role in mitochondrial uncoupling by acting as a proton transporter: proton transport uncouples the proton flows via the electron transport chain and ATP synthase to reduce the efficiency of ATP production and cause mitochondrial thermogenesis. Proton transporter activity is inhibited by ADP:ATP antiporter activity, suggesting that SLC25A4/ANT1 acts as a master regulator of mitochondrial energy output by maintaining a delicate balance between ATP production (ADP:ATP antiporter activity) and thermogenesis (proton transporter activity). Proton transporter activity requires free fatty acids as cofactor, but does not transport it. Probably mediates mitochondrial uncoupling in tissues that do not express UCP1. Also plays a key role in mPTP opening, a non-specific pore that enables free passage of the mitochondrial membranes to solutes of up to 1.5 kDa, and which contributes to cell death. It is however unclear if SLC25A4/ANT1 constitutes a pore-forming component of mPTP or regulates it. Acts as a regulator of mitophagy independently of ADP:ATP antiporter activity: promotes mitophagy via interaction with TIMM44, leading to inhibit the presequence translocase TIMM23, thereby promoting stabilization of PINK1. The polypeptide is ADP/ATP translocase 1 (Oryctolagus cuniculus (Rabbit)).